Consider the following 303-residue polypeptide: Recombination-associated protein RdgC (303 aa).

The protein belongs to the RdgC family.

The protein resides in the cytoplasm. It localises to the nucleoid. In terms of biological role, may be involved in recombination. In Pseudoalteromonas translucida (strain TAC 125), this protein is Recombination-associated protein RdgC.